Here is a 452-residue protein sequence, read N- to C-terminus: MWSGRFSSPVCAPVQSFTASVGFDRAMCHCDAAVLAAHCRSLYLRRVMSIADLADVERGLSEVAMGARAGAISWRPELEDVHRNVEHVLTELVGKAGRMAHTGKSRNDQVSTTARVWLRHMAGAAICRVEELERALAARSRACLNTMMPGLTHMQVAQPVTAAHYLTAYRCMLSRDRSRLVRCTRGACVLTLGSGALAGTNHGGDRYTTADMLGLHCVSPNSLDAVSDRDFVMEYALCCAVLMVHMSRLAEDMIAWSSSIVGFAVLGDALCTGSSIMPQKKNPDILELVRAKAAVLIGGAMGIMAVMKAQGLAYNRDNQEDKAVLLGASRAVTRSLSVMALAVRSLRLNKSRLRRRLESSFAIATDLADSLVWHGMTFRDSHEAVARAVGVAIRAGHAGLRALPLCSRGVVPPLLAARLARIAQPDARVSAFRKDSTGSTSPKWSFRAMRRA.

Residues 431–452 form a disordered region; the sequence is AFRKDSTGSTSPKWSFRAMRRA.

The protein belongs to the lyase 1 family. Argininosuccinate lyase subfamily.

The protein resides in the cytoplasm. It catalyses the reaction 2-(N(omega)-L-arginino)succinate = fumarate + L-arginine. It functions in the pathway amino-acid biosynthesis; L-arginine biosynthesis; L-arginine from L-ornithine and carbamoyl phosphate: step 3/3. The polypeptide is Argininosuccinate lyase (Tremblaya princeps).